The primary structure comprises 192 residues: Cell division protein SepF (192 aa).

The interval 154–192 (QEEPAPSNVTTTTQQSEETISESVTAPEPAWGTPVASAI) is disordered. Residues 162–178 (VTTTTQQSEETISESVT) are compositionally biased toward low complexity.

This sequence belongs to the SepF family. In terms of assembly, homodimer. Interacts with FtsZ.

It localises to the cytoplasm. Cell division protein that is part of the divisome complex and is recruited early to the Z-ring. Probably stimulates Z-ring formation, perhaps through the cross-linking of FtsZ protofilaments. Its function overlaps with FtsA. The protein is Cell division protein SepF of Prochlorococcus marinus (strain MIT 9211).